Here is a 450-residue protein sequence, read N- to C-terminus: LanC-like protein 2 (450 aa).

Glycine 2 is lipidated: N-myristoyl glycine. Residues 2–15 (GETMSKRLKLHLGG) form an interaction with inositol phospholipids region. Tyrosine 198 bears the Phosphotyrosine mark.

Belongs to the LanC-like protein family. As to quaternary structure, interacts with an array of inositol phospholipids such as phosphatidylinositol 3-phosphate (PI3P), phosphatidylinositol 4-phosphate (PI4P) and phosphatidylinositol 5-phosphate (PI5P). PIP-binding enhances membrane association. Post-translationally, myristoylated. Essential for membrane association. Expressed in brain and testis.

It is found in the nucleus. The protein localises to the cytoplasm. It localises to the cell membrane. Its function is as follows. Necessary for abscisic acid (ABA) binding on the cell membrane and activation of the ABA signaling pathway in granulocytes. The sequence is that of LanC-like protein 2 (LANCL2) from Homo sapiens (Human).